The primary structure comprises 688 residues: Potassium-transporting ATPase ATP-binding subunit (688 aa).

4 helical membrane passes run 34–54 (PVMF…LAIL), 62–82 (AMFT…ANMA), 219–239 (VALT…TATL), and 260–280 (VLVA…LSAI). Residue Asp-313 is the 4-aspartylphosphate intermediate of the active site. Residues Asp-350, Glu-354, 383-390 (FSAQTRMS), and Lys-401 each bind ATP. Residues Asp-524 and Asp-528 each contribute to the Mg(2+) site. A run of 3 helical transmembrane segments spans residues 594-614 (FAII…LNIM), 622-642 (AILS…PLAL), and 662-682 (IYGL…DLLL).

It belongs to the cation transport ATPase (P-type) (TC 3.A.3) family. Type IA subfamily. As to quaternary structure, the system is composed of three essential subunits: KdpA, KdpB and KdpC.

It is found in the cell inner membrane. The catalysed reaction is K(+)(out) + ATP + H2O = K(+)(in) + ADP + phosphate + H(+). Functionally, part of the high-affinity ATP-driven potassium transport (or Kdp) system, which catalyzes the hydrolysis of ATP coupled with the electrogenic transport of potassium into the cytoplasm. This subunit is responsible for energy coupling to the transport system and for the release of the potassium ions to the cytoplasm. This Yersinia pseudotuberculosis serotype I (strain IP32953) protein is Potassium-transporting ATPase ATP-binding subunit.